We begin with the raw amino-acid sequence, 3567 residues long: Erythronolide synthase EryA2 (3567 aa).

In terms of domain architecture, Ketosynthase family 3 (KS3) 1 spans 30–455 (SDPIAIVSMA…GTNAHVIVEE (426 aa)). 2 module regions span residues 33-1467 (IAIV…QHLR) and 1491-3485 (IAIV…EHLR). Cysteine 202 (acyl-thioester intermediate; for beta-ketoacyl synthase 1 activity) is an active-site residue. Catalysis depends on for beta-ketoacyl synthase 1 activity residues histidine 337 and histidine 377. Positions 560–880 (VFLFPGQGSQ…MATAHVSGVD (321 aa)) are acyltransferase 1. Residue serine 651 is the Acyl-ester intermediate; for acyltransferase 1 activity of the active site. Residues 1132 to 1297 (GTVLVTGAAS…CTSVAWTPWA (166 aa)) are C2-type beta-ketoacyl reductase 1. Tyrosine 1267 serves as the catalytic For C2-type beta-ketoacyl reductase 1 and probable racemase activity. Residues 1364 to 1385 (GRGGQAEAEPDSGPTGEPAQRL) are disordered. The 76-residue stretch at 1395–1470 (ENLLELVANA…ALAQHLRARL (76 aa)) folds into the Carrier 1 domain. Position 1430 is an O-(pantetheine 4'-phosphoryl)serine (serine 1430). The 425-residue stretch at 1488 to 1912 (SEPIAIVGIG…GTNAHVIVEE (425 aa)) folds into the Ketosynthase family 3 (KS3) 2 domain. Cysteine 1661 acts as the Acyl-thioester intermediate; for beta-ketoacyl synthase 2 activity in catalysis. Residues histidine 1796 and histidine 1834 each act as for beta-ketoacyl synthase 2 activity in the active site. The acyltransferase 2 stretch occupies residues 2015-2331 (LVFPGQGAQW…NLLRAHVHGV (317 aa)). Catalysis depends on serine 2105, which acts as the Acyl-ester intermediate; for acyltransferase 2 activity. The tract at residues 2377 to 2502 (HPLLLAAVDV…GTLAQGVAAG (126 aa)) is N-terminal hotdog fold. A dehydratase region spans residues 2377–2645 (HPLLLAAVDV…SLVVRSTGEK (269 aa)). Residues 2377 to 2648 (HPLLLAAVDV…VRSTGEKWEQ (272 aa)) enclose the PKS/mFAS DH domain. Histidine 2409 serves as the catalytic Proton acceptor; for dehydratase activity. The segment at 2514 to 2648 (AVRIPLDDHY…VRSTGEKWEQ (135 aa)) is C-terminal hotdog fold. The Proton donor; for dehydratase activity role is filled by aspartate 2571. The segment at 2831–3131 (GAIDSVAFEP…RGRHVGKLVL (301 aa)) is enoyl reductase. Tyrosine 2874 functions as the For enoyl reductase activity in the catalytic mechanism. NADP(+)-binding positions include 2964–2973 (HAAAGGVGMA), 3149–3152 (TGTL), 3173–3176 (SRRG), 3202–3203 (DT), lysine 3250, and 3272–3273 (FS). Positions 3141 to 3317 (GTVLITGGTG…AKALGWGLWA (177 aa)) are beta-ketoacyl reductase 2. Tyrosine 3287 serves as the catalytic For beta-ketoacyl reductase 2 activity. In terms of domain architecture, Carrier 2 spans 3413–3488 (AGLAELVRSH…AVAEHLRDRL (76 aa)). O-(pantetheine 4'-phosphoryl)serine is present on serine 3448.

Homodimer. Erythronolide synthase is composed of EryAI, EryAII and EryAIII multimodular (2 modules) polypeptides each coding for a functional synthase subunit which participates in 2 of the six FAS-like elongation steps required for formation of the polyketide. Module 1, 2, 3, 4, 5, and 6 participating in biosynthesis steps 1, 2, 3, 4, 5, and 6, respectively. Pantetheine 4'-phosphate serves as cofactor.

The enzyme catalyses 6 (S)-methylmalonyl-CoA + propanoyl-CoA + 6 NADPH + 12 H(+) = 6-deoxyerythronolide B + 6 CO2 + 6 NADP(+) + 7 CoA + H2O. The protein operates within antibiotic biosynthesis; erythromycin biosynthesis. Functionally, involved in the biosynthesis of antibiotic erythromycin via the biosynthesis of its aglycone precursor, 6-deoxyerythronolide B (6-dEB). This is Erythronolide synthase EryA2 from Saccharopolyspora erythraea (Streptomyces erythraeus).